A 310-amino-acid polypeptide reads, in one-letter code: Ribonuclease Z (310 aa).

The Zn(2+) site is built by histidine 63, histidine 65, aspartate 67, histidine 68, histidine 141, aspartate 212, and histidine 270. The active-site Proton acceptor is aspartate 67.

It belongs to the RNase Z family. In terms of assembly, homodimer. It depends on Zn(2+) as a cofactor.

It carries out the reaction Endonucleolytic cleavage of RNA, removing extra 3' nucleotides from tRNA precursor, generating 3' termini of tRNAs. A 3'-hydroxy group is left at the tRNA terminus and a 5'-phosphoryl group is left at the trailer molecule.. Zinc phosphodiesterase, which displays some tRNA 3'-processing endonuclease activity. Probably involved in tRNA maturation, by removing a 3'-trailer from precursor tRNA. In Limosilactobacillus fermentum (strain NBRC 3956 / LMG 18251) (Lactobacillus fermentum), this protein is Ribonuclease Z.